Here is a 62-residue protein sequence, read N- to C-terminus: uncharacterized protein (62 aa).

This is an uncharacterized protein from Bacillus subtilis (strain 168).